The chain runs to 238 residues: tRNA1(Val) (adenine(37)-N6)-methyltransferase (238 aa).

Belongs to the methyltransferase superfamily. tRNA (adenine-N(6)-)-methyltransferase family.

Its subcellular location is the cytoplasm. The enzyme catalyses adenosine(37) in tRNA1(Val) + S-adenosyl-L-methionine = N(6)-methyladenosine(37) in tRNA1(Val) + S-adenosyl-L-homocysteine + H(+). Its function is as follows. Specifically methylates the adenine in position 37 of tRNA(1)(Val) (anticodon cmo5UAC). The sequence is that of tRNA1(Val) (adenine(37)-N6)-methyltransferase from Shewanella sp. (strain W3-18-1).